A 123-amino-acid polypeptide reads, in one-letter code: CD59A glycoprotein (123 aa).

The N-terminal stretch at 1–23 is a signal peptide; it reads MRAQRGLILLLLLLAVFCSTAVS. A UPAR/Ly6 domain is found at 24 to 96; it reads LTCYHCFQPV…CCQFNLCNKS (73 aa). 5 cysteine pairs are disulfide-bonded: C26–C50, C29–C37, C43–C63, C69–C87, and C88–C93. An N-linked (GlcNAc...) asparagine glycan is attached at N40. N-linked (GlcNAc...) asparagine glycosylation is present at N94. The propeptide at 97–123 is removed in mature form; it reads DGSLGKTPLLGTSVLVAILNLCFLSHL.

Interacts with T-cell surface antigen CD2. N- and O-glycosylated. As to expression, expressed in all tissues examined (liver, kidney, spleen, thymus, brain and heart). Low levels in thymus. Also expressed in mononuclear cells, erythrocytes and platelets. Barely detected in neutrophils.

The protein resides in the cell membrane. Its subcellular location is the secreted. In terms of biological role, potent inhibitor of the complement membrane attack complex (MAC) action, which protects self-cells from damage during complement activation. Acts by binding to the beta-haipins of C8 (C8A and C8B) components of the assembling MAC, forming an intermolecular beta-sheet that prevents incorporation of the multiple copies of C9 required for complete formation of the osmolytic pore. The sequence is that of CD59A glycoprotein from Mus musculus (Mouse).